A 1132-amino-acid polypeptide reads, in one-letter code: Serine/threonine-protein kinase spk-1 (1132 aa).

The helical transmembrane segment at 75–95 (GGSLILTDIFPTVLFMFVVLF) threads the bilayer. Disordered regions lie at residues 240–388 (NEDQ…DSDD) and 419–481 (NKKA…KRGG). Acidic residues-rich tracts occupy residues 281 to 290 (SEDEDVESQE) and 311 to 336 (DEPI…LGDE). The segment covering 362-372 (DSSVSSSTSST) has biased composition (low complexity). The span at 373-388 (PDDDEDDSATSYDSDD) shows a compositional bias: acidic residues. Residues 421–433 (KAEVNANEERMDD) are compositionally biased toward basic and acidic residues. A compositionally biased stretch (low complexity) spans 434-443 (VSVSPGRSDS). One can recognise a Protein kinase domain in the interval 495-1044 (YHVIRKLGWG…ANDALKHPFL (550 aa)). Residues 501 to 509 (LGWGHFSTV) and lysine 524 each bind ATP. Aspartate 628 functions as the Proton acceptor in the catalytic mechanism. The tract at residues 1066–1121 (QVPEALDGNQEVYRDENDSNSASERSANRSAGSDDEEEFHMDRPGPSGVINEPADV) is disordered. The segment covering 1084 to 1096 (SNSASERSANRSA) has biased composition (low complexity).

The protein belongs to the protein kinase superfamily. Ser/Thr protein kinase family.

It is found in the membrane. It catalyses the reaction L-seryl-[protein] + ATP = O-phospho-L-seryl-[protein] + ADP + H(+). It carries out the reaction L-threonyl-[protein] + ATP = O-phospho-L-threonyl-[protein] + ADP + H(+). Required for embryogenesis and germline development in both adult hermaphrodites and males. SR-protein kinase (SRPK) that binds directly to and phosphorylates RS domains. This chain is Serine/threonine-protein kinase spk-1 (spk-1), found in Caenorhabditis briggsae.